The primary structure comprises 160 residues: Outer membrane protein MT2024.1 (160 aa).

Positions 1 to 22 (MSWSRVIAYGLLPGLALALTCG) are cleaved as a signal peptide.

The protein resides in the cell outer membrane. This chain is Outer membrane protein MT2024.1, found in Mycobacterium tuberculosis (strain CDC 1551 / Oshkosh).